Consider the following 118-residue polypeptide: Non-specific lipid-transfer protein 2A (118 aa).

A signal peptide spans 1–26; the sequence is MARAQLVLVALVAAALLLAGPHTTMA. Cystine bridges form between C30–C77, C40–C54, C55–C100, and C75–C114.

It belongs to the plant LTP family.

Its function is as follows. Plant non-specific lipid-transfer proteins transfer phospholipids as well as galactolipids across membranes. May play a role in wax or cutin deposition in the cell walls of expanding epidermal cells and certain secretory tissues. This chain is Non-specific lipid-transfer protein 2A (LTP2-A), found in Oryza sativa subsp. japonica (Rice).